The sequence spans 181 residues: Inner membrane-spanning protein YciB (181 aa).

5 helical membrane passes run leucine 10 to isoleucine 30, methionine 50 to aspartate 70, alanine 72 to serine 92, valine 118 to phenylalanine 138, and phenylalanine 148 to leucine 168.

The protein belongs to the YciB family.

The protein resides in the cell inner membrane. Plays a role in cell envelope biogenesis, maintenance of cell envelope integrity and membrane homeostasis. The chain is Inner membrane-spanning protein YciB from Shewanella oneidensis (strain ATCC 700550 / JCM 31522 / CIP 106686 / LMG 19005 / NCIMB 14063 / MR-1).